A 239-amino-acid polypeptide reads, in one-letter code: IkB-like protein (239 aa).

ANK repeat units follow at residues 48–80, 87–118, 124–153, and 158–187; these read SKIT…EIIS, DGNS…GIKV, NGIT…NPNQ, and KGFN…KPLF. The short motif at 81–87 is the Nuclear localization signal element; sequence HYRRDKD. Residues 203 to 214 carry the Nuclear localization signal motif; sequence KKKPKIIITSCE. The PxIxITxC motif; Interaction with host PPP3CA signature appears at 206 to 213; it reads PKIIITSC. The short motif at 228–231 is the FLCV motif element; the sequence is FLCV.

It belongs to the asfivirus A238L family. As to quaternary structure, interacts with host PPIA. Interacts with host PPP3CA/Calcineurin. Interacts with host RELA/p65; interaction of the 32 kDa form with host RELA results in the formation of a stable complex with NF-kappa-B. Interacts with host PPP3R1. Interacts with host EP300; this interaction inhibits the association of host EP300 with host RELA, JUN and NFATC2. Post-translationally, the protein exists in a 28 kDa and a 32 kDa form, probably due to post-translational modifications which are neither phosphorylation, nor sumoylation.

Its subcellular location is the host nucleus. The protein resides in the host cytoplasm. IkB-like protein that inhibits the binding of NF-kappa-B to DNA, thereby downregulating pro-inflammatory cytokine production. Forms a heterodimer with the NF-kappa-B subunit RELA/p65 and prevents the activation of the NF-kappa-B transcription factor. Inhibits calcineurin function, which is required for the induction of nuclear factor of activated T cells (NFAT)-dependent immune response genes. Prevents the binding of substrates to calcineurin without affecting the phosphatase activity. Does not contain the serine residues that are phosphorylated by host IkB kinase and thus is not degraded following stimulation of the NFkB pathway. The protein is IkB-like protein (A238L) of Ornithodoros (relapsing fever ticks).